A 356-amino-acid polypeptide reads, in one-letter code: Guanine nucleotide-binding protein alpha-2 subunit (356 aa).

Positions 1–25 are disordered; it reads MGLCQSEEEKVGSQKSRAIDKEIKQ. Glycine 2 carries N-myristoyl glycine lipidation. Cysteine 4 is lipidated: S-palmitoyl cysteine. The span at 7-25 shows a compositional bias: basic and acidic residues; sequence EEEKVGSQKSRAIDKEIKQ. The G-alpha domain occupies 14-338; it reads QKSRAIDKEI…TDTNQVQKIL (325 aa). The interval 17-30 is G1 motif; it reads RAIDKEIKQNQSND. Glutamine 25, glutamine 27, serine 28, asparagine 29, aspartate 30, valine 135, glutamate 160, alanine 166, valine 188, glutamate 254, serine 255, cysteine 257, and phenylalanine 310 together coordinate GTP. Asparagine 29 lines the Mg(2+) pocket. The tract at residues 158–166 is G2 motif; sequence FFENLDRIA. Alanine 166 provides a ligand contact to Mg(2+). Positions 181-190 are G3 motif; that stretch reads RTKTTGIVEV. Residues 250-257 are G4 motif; sequence MRLFESIC. Residues 308–313 are G5 motif; that stretch reads QKFEAL.

This sequence belongs to the G-alpha family. G(q) subfamily. In terms of assembly, g proteins are composed of 3 units; alpha, beta and gamma. The alpha chain contains the guanine nucleotide binding site. It depends on Mg(2+) as a cofactor.

Its function is as follows. Guanine nucleotide-binding proteins (G proteins) are involved as modulators or transducers in various transmembrane signaling systems. Involved in behavioral responses to P.aeruginosa by controlling the expression of daf-7, a member of the TGF-beta family, in ASJ sensory neurons. This chain is Guanine nucleotide-binding protein alpha-2 subunit (gpa-2), found in Caenorhabditis briggsae.